A 630-amino-acid chain; its full sequence is 1-deoxy-D-xylulose-5-phosphate synthase (630 aa).

Thiamine diphosphate contacts are provided by residues histidine 72 and 113–115; that span reads GHS. A Mg(2+)-binding site is contributed by aspartate 144. Thiamine diphosphate contacts are provided by residues 145–146, asparagine 173, tyrosine 284, and glutamate 367; that span reads GA. Mg(2+) is bound at residue asparagine 173.

It belongs to the transketolase family. DXPS subfamily. In terms of assembly, homodimer. Requires Mg(2+) as cofactor. Thiamine diphosphate serves as cofactor.

The catalysed reaction is D-glyceraldehyde 3-phosphate + pyruvate + H(+) = 1-deoxy-D-xylulose 5-phosphate + CO2. Its pathway is metabolic intermediate biosynthesis; 1-deoxy-D-xylulose 5-phosphate biosynthesis; 1-deoxy-D-xylulose 5-phosphate from D-glyceraldehyde 3-phosphate and pyruvate: step 1/1. Catalyzes the acyloin condensation reaction between C atoms 2 and 3 of pyruvate and glyceraldehyde 3-phosphate to yield 1-deoxy-D-xylulose-5-phosphate (DXP). This Bacillus cereus (strain B4264) protein is 1-deoxy-D-xylulose-5-phosphate synthase.